The primary structure comprises 1505 residues: MPVRPDPQQLEKCIDDALRKNDFKPLVTLLQIDICEDVKIKCSKQFLRKLDDLICRELHKKDIQTISNILISIGRCSKNIFILGQTGLQTMIKQGLVQKMVSWFENSKEIILSQRQSKDEAVMNMIEDLFDLLMVVYDVNDEGKNQVLESFIPHICALVIDSRVNFCIQQEALKKMNLMLDRIPQDANKILCNQEILTLMSNMGERILDVGDYELQVGIVEALCRMTTEKRRQELAYEWFSMDFIANAFKKIKDCEFETDCRIFLNLVNGMLGDRRRVFTFPCLSAFLGKYELQIPSDEKLEEFWIDFNLGSHTLSFYIAGDDDDHQWEAVTVPEEKVDMYNIEVRESKKLLTLTLKNIVKISKKEGKELLLYFDAALEITNVTKKLFGGNKYKEFTRKQDISVAKTSIHVLFDASGSQILVPESQPSPVKENLIHLKEKSNLQKKLTNPLEPDNSSSQRDRKNSQDEITTPSRKKMSEASMIVPDTDRYTVRSPILLINTSTPRRSRAPLQAIHSAEKAVSKTSESGVDYAVSLKSRQSDGRNRGNNRANHNKTATVQNKGHEHHESPDQTFNEIEETLSDAYAVEKVDKPVLPGVLDISKNKAHSRWACWTPVTTIKLCNNQRSCALPGDTFTQDTGVNKKCTKQKSVSDDDSEETQRVKYSKDVIKCNKSEEAEVCERNIQEQNHPKYSQKKNTANAKKNDWHIESETTYKSVLLNKTTEESLIYKKTCVLSKDVNTTICDKSPSRKSMRSHTKSRKELMSEVTSCELDEIPVRENSKGKRFTGTAESLINLINKRYNSSDDMISTRKLKEPRDGSGFSKKPELQFNKVQRKSYRKLKTVVNVTSECPLNDVYNFSLNGADEPVIKLGIQEFQATTREASMDNSIKLVDVRNRDERDLSLKTKDERILSHERKTLFSDTETECGWDDSKTDISWLRKPKSKRLMDYSRNKNTKKCKSIKSRSSTEKGQPRSTVVLSKNIAKNDYEVIVDGRTRLPRRATKTKKNYKDLSTSGSESESEKEISYLFKDKLPTKEETVHSSAQTKKLPKKQQKVFNTEALKGQPSEEQKNSSTLRNGREDSLYLSSASVSGSSSSVEVMRCTEKITERDFTQDYDYITKSLSPYPKAASPEFLNRSNRVVGHGKSPRISETSAVCVRKSCSPASGLPFSPRHTTKNNSVMNIKNTNSVINNQRTQHCNSYSDVSSNSSEKLYMEPESPDSCENHVQSKREENHAASPFSLSSEKIEKIWFDMPNDNTHVSGPSQRGSKRRMYLEEDELSNPSEAEVQEAEEREHLVSKKLCQREHFDQHTSETSLSTPEFSVPKDWQQELQGAGMFYDNINSDYKRKTDTQHKIMDDFTTKTLKLTQQHLLAMACQARGHRDENIDKFQVTLLDELEKVEKDSQTLRDLEKEFVDIEEKIVHKMRAFHQSERERFRALKTSLDKSLLVYNSVYEENVLTSEMCLMKANMKMLQDKLLKEMHEEELLNIRRGLESLFKDHEGNNA.

The disordered stretch occupies residues 439-483; sequence EKSNLQKKLTNPLEPDNSSSQRDRKNSQDEITTPSRKKMSEASMI. Phosphoserine occurs at positions 457 and 465. Threonine 471 carries the phosphothreonine modification. Serine 494 is subject to Phosphoserine. Position 503 is a phosphothreonine (threonine 503). Residues serine 507, serine 516, serine 525, and serine 534 each carry the phosphoserine modification. The segment at 536 to 571 is disordered; sequence KSRQSDGRNRGNNRANHNKTATVQNKGHEHHESPDQ. 2 positions are modified to phosphothreonine: threonine 613 and threonine 638. Phosphoserine occurs at positions 651, 655, and 746. Positions 745 to 764 are disordered; that stretch reads KSPSRKSMRSHTKSRKELMS. Over residues 748-758 the composition is skewed to basic residues; it reads SRKSMRSHTKS. Phosphoserine is present on serine 920. Phosphothreonine is present on threonine 922. 2 disordered regions span residues 949–974 and 1035–1080; these read YSRN…QPRS and KEET…NGRE. A compositionally biased stretch (basic residues) spans 953-962; that stretch reads KNTKKCKSIK. A phosphoserine mark is found at serine 1121, serine 1123, serine 1130, serine 1146, serine 1150, serine 1162, serine 1165, and serine 1170. Threonine 1174 carries the phosphothreonine modification. Serine 1188 carries the phosphoserine modification. The segment at 1199 to 1239 is disordered; sequence NSYSDVSSNSSEKLYMEPESPDSCENHVQSKREENHAASPF. Low complexity predominate over residues 1200–1209; the sequence is SYSDVSSNSS. A phosphoserine mark is found at serine 1218 and serine 1221. A compositionally biased stretch (basic and acidic residues) spans 1222–1234; it reads CENHVQSKREENH. Residues serine 1237, serine 1280, and serine 1283 each carry the phosphoserine modification. Phosphothreonine is present on threonine 1318. The stretch at 1384 to 1435 forms a coiled coil; the sequence is ENIDKFQVTLLDELEKVEKDSQTLRDLEKEFVDIEEKIVHKMRAFHQSERER.

The protein belongs to the SYCP2 family. In terms of assembly, component of the lateral elements of synaptonemal complexes. Interacts with TEX11. Heterodimer with SYCP3. Interacts with SYCP3, SMC1A and SMC3. In terms of processing, phosphorylated. As to expression, detected in spermatocytes and testis (at protein level). Spermatocytes and oocytes. Meiotic prophase cells.

It localises to the nucleus. The protein localises to the chromosome. Functionally, major component of the axial/lateral elements of synaptonemal complexes (SCS) during meiotic prophase. Plays a role in the assembly of synaptonemal complexes. Required for normal meiotic chromosome synapsis during oocyte and spermatocyte development and for normal male and female fertility. Required for insertion of SYCP3 into synaptonemal complexes. May be involved in the organization of chromatin by temporarily binding to DNA scaffold attachment regions. Requires SYCP3, but not SYCP1, in order to be incorporated into the axial/lateral elements. The sequence is that of Synaptonemal complex protein 2 (Sycp2) from Rattus norvegicus (Rat).